A 282-amino-acid polypeptide reads, in one-letter code: Glutamyl endopeptidase (282 aa).

An N-terminal signal peptide occupies residues Met1–Ala27. The propeptide occupies Lys28 to Ser66. Active-site charge relay system residues include His117, Asp159, and Ser235.

Belongs to the peptidase S1B family.

Its subcellular location is the secreted. The catalysed reaction is Preferential cleavage: Glu-|-Xaa, Asp-|-Xaa.. Exhibits a significant hydrolytic activity for the carbonyl side of glutamic acid. Shows activity toward human fibronectin and type 1 collagen. This is Glutamyl endopeptidase (gseA) from Staphylococcus epidermidis (strain ATCC 35984 / DSM 28319 / BCRC 17069 / CCUG 31568 / BM 3577 / RP62A).